A 79-amino-acid chain; its full sequence is DNA-directed RNA polymerase subunit omega (79 aa).

This sequence belongs to the RNA polymerase subunit omega family. The RNAP catalytic core consists of 2 alpha, 1 beta, 1 beta' and 1 omega subunit. When a sigma factor is associated with the core the holoenzyme is formed, which can initiate transcription.

The catalysed reaction is RNA(n) + a ribonucleoside 5'-triphosphate = RNA(n+1) + diphosphate. In terms of biological role, promotes RNA polymerase assembly. Latches the N- and C-terminal regions of the beta' subunit thereby facilitating its interaction with the beta and alpha subunits. This is DNA-directed RNA polymerase subunit omega from Kosmotoga olearia (strain ATCC BAA-1733 / DSM 21960 / TBF 19.5.1).